Here is a 635-residue protein sequence, read N- to C-terminus: Chaperone protein DnaK (635 aa).

Thr-198 is subject to Phosphothreonine; by autocatalysis. Residues 606–635 (QATAASPGAEAPKADDDVVDAEFSEVDENK) form a disordered region. Acidic residues predominate over residues 622–635 (DVVDAEFSEVDENK).

This sequence belongs to the heat shock protein 70 family.

Acts as a chaperone. The sequence is that of Chaperone protein DnaK from Novosphingobium aromaticivorans (strain ATCC 700278 / DSM 12444 / CCUG 56034 / CIP 105152 / NBRC 16084 / F199).